The chain runs to 59 residues: MAVQQNKKSPSKRGMHRSHDHLSVAPLAVEPTTGETHLRHHVSPNGYYRGRKVIKTKND.

A disordered region spans residues 1-59 (MAVQQNKKSPSKRGMHRSHDHLSVAPLAVEPTTGETHLRHHVSPNGYYRGRKVIKTKND). Composition is skewed to basic residues over residues 9 to 19 (SPSKRGMHRSH) and 49 to 59 (RGRKVIKTKND).

The protein belongs to the bacterial ribosomal protein bL32 family.

In Cupriavidus metallidurans (strain ATCC 43123 / DSM 2839 / NBRC 102507 / CH34) (Ralstonia metallidurans), this protein is Large ribosomal subunit protein bL32.